The following is a 317-amino-acid chain: Protoheme IX farnesyltransferase (317 aa).

Transmembrane regions (helical) follow at residues 36-56 (VMVL…ATVN), 57-77 (PVIA…SGCL), 108-128 (LAFG…ASNW), 129-149 (LAAG…SMWL), 157-177 (IVIG…AVTG), 184-204 (LVLF…LALV), 230-247 (IIWY…PVWL), 251-273 (GWLY…VQVY), and 284-304 (AAMG…SALL).

This sequence belongs to the UbiA prenyltransferase family. Protoheme IX farnesyltransferase subfamily.

Its subcellular location is the cell inner membrane. It carries out the reaction heme b + (2E,6E)-farnesyl diphosphate + H2O = Fe(II)-heme o + diphosphate. It functions in the pathway porphyrin-containing compound metabolism; heme O biosynthesis; heme O from protoheme: step 1/1. Functionally, converts heme B (protoheme IX) to heme O by substitution of the vinyl group on carbon 2 of heme B porphyrin ring with a hydroxyethyl farnesyl side group. This chain is Protoheme IX farnesyltransferase, found in Methylorubrum extorquens (strain CM4 / NCIMB 13688) (Methylobacterium extorquens).